The sequence spans 194 residues: Peptidyl-tRNA hydrolase (194 aa).

A tRNA-binding site is contributed by Tyr17. His22 (proton acceptor) is an active-site residue. 3 residues coordinate tRNA: Tyr68, Asn70, and Asn116.

This sequence belongs to the PTH family. In terms of assembly, monomer.

It localises to the cytoplasm. It carries out the reaction an N-acyl-L-alpha-aminoacyl-tRNA + H2O = an N-acyl-L-amino acid + a tRNA + H(+). Functionally, hydrolyzes ribosome-free peptidyl-tRNAs (with 1 or more amino acids incorporated), which drop off the ribosome during protein synthesis, or as a result of ribosome stalling. In terms of biological role, catalyzes the release of premature peptidyl moieties from peptidyl-tRNA molecules trapped in stalled 50S ribosomal subunits, and thus maintains levels of free tRNAs and 50S ribosomes. The protein is Peptidyl-tRNA hydrolase of Azotobacter vinelandii (strain DJ / ATCC BAA-1303).